Reading from the N-terminus, the 236-residue chain is Opacity protein opA50 (236 aa).

A signal peptide is located at residue Ala1.

This sequence belongs to the opacity porin family.

The protein localises to the cell outer membrane. Implicated in a number of adherence functions. OPA proteins are implicated in pathogenesis and are subject to phase variation. In Neisseria gonorrhoeae, this protein is Opacity protein opA50 (opaC).